Consider the following 462-residue polypeptide: Cysteine--tRNA ligase (462 aa).

Residue Cys24 participates in Zn(2+) binding. The 'HIGH' region motif lies at 26–36 (PTVYDDAHLGH). The Zn(2+) site is built by Cys199, His224, and Glu228. A 'KMSKS' region motif is present at residues 256-260 (KMSKS). Position 259 (Lys259) interacts with ATP.

The protein belongs to the class-I aminoacyl-tRNA synthetase family. Monomer. Zn(2+) serves as cofactor.

Its subcellular location is the cytoplasm. The enzyme catalyses tRNA(Cys) + L-cysteine + ATP = L-cysteinyl-tRNA(Cys) + AMP + diphosphate. The chain is Cysteine--tRNA ligase from Campylobacter jejuni subsp. jejuni serotype O:6 (strain 81116 / NCTC 11828).